The following is a 451-amino-acid chain: Tubulin gamma-1 chain (451 aa).

142 to 148 is a GTP binding site; that stretch reads AGGTGSG.

Belongs to the tubulin family.

Its subcellular location is the cytoplasm. It localises to the cytoskeleton. The protein localises to the microtubule organizing center. It is found in the centrosome. The protein resides in the spindle. In terms of biological role, tubulin is the major constituent of microtubules. The gamma chain is found at microtubule organizing centers (MTOC) such as the spindle poles or the centrosome, suggesting that it is involved in the minus-end nucleation of microtubule assembly. The polypeptide is Tubulin gamma-1 chain (tubg1) (Xenopus laevis (African clawed frog)).